Reading from the N-terminus, the 351-residue chain is Nicotinate-nucleotide--dimethylbenzimidazole phosphoribosyltransferase (351 aa).

The Proton acceptor role is filled by Glu317.

It belongs to the CobT family.

It catalyses the reaction 5,6-dimethylbenzimidazole + nicotinate beta-D-ribonucleotide = alpha-ribazole 5'-phosphate + nicotinate + H(+). It participates in nucleoside biosynthesis; alpha-ribazole biosynthesis; alpha-ribazole from 5,6-dimethylbenzimidazole: step 1/2. In terms of biological role, catalyzes the synthesis of alpha-ribazole-5'-phosphate from nicotinate mononucleotide (NAMN) and 5,6-dimethylbenzimidazole (DMB). This chain is Nicotinate-nucleotide--dimethylbenzimidazole phosphoribosyltransferase, found in Pseudomonas putida (strain ATCC 47054 / DSM 6125 / CFBP 8728 / NCIMB 11950 / KT2440).